The chain runs to 382 residues: Anhydro-N-acetylmuramic acid kinase (382 aa).

9-16 (GTSLDGID) contacts ATP.

This sequence belongs to the anhydro-N-acetylmuramic acid kinase family.

It carries out the reaction 1,6-anhydro-N-acetyl-beta-muramate + ATP + H2O = N-acetyl-D-muramate 6-phosphate + ADP + H(+). It participates in amino-sugar metabolism; 1,6-anhydro-N-acetylmuramate degradation. It functions in the pathway cell wall biogenesis; peptidoglycan recycling. In terms of biological role, catalyzes the specific phosphorylation of 1,6-anhydro-N-acetylmuramic acid (anhMurNAc) with the simultaneous cleavage of the 1,6-anhydro ring, generating MurNAc-6-P. Is required for the utilization of anhMurNAc either imported from the medium or derived from its own cell wall murein, and thus plays a role in cell wall recycling. The chain is Anhydro-N-acetylmuramic acid kinase from Bacillus cereus (strain AH187).